Reading from the N-terminus, the 486-residue chain is ATP-dependent 6-phosphofructokinase (486 aa).

Residues G105, 171-172 (RG), and 196-199 (GDGT) contribute to the ATP site. Mg(2+) is bound at residue D197. Substrate is bound by residues 225 to 227 (TID), 270 to 272 (MGR), E323, and 378 to 381 (YMIR). D227 acts as the Proton acceptor in catalysis. The Peroxisomal targeting signal motif lies at 484–486 (SKV).

This sequence belongs to the phosphofructokinase type A (PFKA) family. PPi-dependent PFK group II subfamily. Atypical ATP-dependent clade 'X' sub-subfamily. As to quaternary structure, homotetramer. It depends on Mg(2+) as a cofactor.

It is found in the glycosome. The enzyme catalyses beta-D-fructose 6-phosphate + ATP = beta-D-fructose 1,6-bisphosphate + ADP + H(+). It participates in carbohydrate degradation; glycolysis; D-glyceraldehyde 3-phosphate and glycerone phosphate from D-glucose: step 3/4. Allosterically activated by AMP. In terms of biological role, catalyzes the phosphorylation of D-fructose 6-phosphate to fructose 1,6-bisphosphate by ATP, the first committing step of glycolysis. The polypeptide is ATP-dependent 6-phosphofructokinase (Leishmania donovani).